The following is a 1716-amino-acid chain: DNA-directed RNA polymerase I subunit RPA1 (1716 aa).

Zn(2+) is bound by residues C64, C67, C74, H77, C104, and C107. The segment at L110–A201 is clamp. Zn(2+) contacts are provided by C205 and C208. A clamp region spans residues F327–G433. Residues D410–G423 form a rudder region. K431, R436, and R443 together coordinate DNA. The tract at residues Y475–V549 is involved in RRN3 binding to Pol I complex. RNA is bound at residue R559. D595, D597, and D599 together coordinate Mg(2+). D599 contributes to the RNA binding site. The funnel stretch occupies residues K812 to F890. Residues R967–I1008 are bridging helix. Positions A1067–H1162 are mediates the interaction with TOP2A. Residues P1214–L1255 form a trigger loop region. DNA is bound at residue R1256. The tract at residues A1368–A1493 is disordered. Over residues T1380–E1397 the composition is skewed to basic and acidic residues. Composition is skewed to acidic residues over residues E1398 to A1419 and E1429 to E1451. Basic and acidic residues predominate over residues E1452 to E1464. A compositionally biased stretch (acidic residues) spans P1465 to S1477.

It belongs to the RNA polymerase beta' chain family. In terms of assembly, component of the RNA polymerase I (Pol I) complex consisting of 13 subunits: a ten-subunit catalytic core composed of POLR1A/RPA1, POLR1B/RPA2, POLR1C/RPAC1, POLR1D/RPAC2, POLR1H/RPA12, POLR2E/RPABC1, POLR2F/RPABC2, POLR2H/RPABC3, POLR2K/RPABC4 and POLR2L/RPABC5; a mobile stalk subunit POLR1F/RPA43 protruding from the core and additional subunits homologous to general transcription factors POLR1E/RPA49 and POLR1G/RPA34. Part of Pol I pre-initiation complex (PIC), in which Pol I core assembles with RRN3 and promoter-bound UTBF and SL1/TIF-IB complex. Interacts (via dock II domain) with TOP2A; this interaction may assist Pol I transcription initiation by releasing supercoils occurring during DNA unwinding. Interacts with CAVIN1; this interaction induces the dissociation of Pol I complex paused at rDNA terminator sequences. Interacts with MYO1C. Interacts with ERBB2. Interacts with DDX11. Interacts with RECQL5. The cofactor is Mg(2+). Phosphorylated.

Its subcellular location is the nucleus. The protein resides in the nucleolus. It localises to the chromosome. It catalyses the reaction RNA(n) + a ribonucleoside 5'-triphosphate = RNA(n+1) + diphosphate. Catalytic core component of RNA polymerase I (Pol I), a DNA-dependent RNA polymerase which synthesizes ribosomal RNA precursors using the four ribonucleoside triphosphates as substrates. Transcribes 47S pre-rRNAs from multicopy rRNA gene clusters, giving rise to 5.8S, 18S and 28S ribosomal RNAs. Pol I-mediated transcription cycle proceeds through transcription initiation, transcription elongation and transcription termination stages. During transcription initiation, Pol I pre-initiation complex (PIC) is recruited by the selectivity factor 1 (SL1/TIF-IB) complex bound to the core promoter that precedes an rDNA repeat unit. The PIC assembly bends the promoter favoring the formation of the transcription bubble and promoter escape. Once the polymerase has escaped from the promoter it enters the elongation phase during which RNA is actively polymerized, based on complementarity with the template DNA strand. Highly processive, assembles in structures referred to as 'Miller trees' where many elongating Pol I complexes queue and transcribe the same rDNA coding regions. At terminator sequences downstream of the rDNA gene, PTRF interacts with Pol I and halts Pol I transcription leading to the release of the RNA transcript and polymerase from the DNA. Forms Pol I active center together with the second largest subunit POLR1B/RPA2. Appends one nucleotide at a time to the 3' end of the nascent RNA, with POLR1A/RPA1 contributing a Mg(2+)-coordinating DxDGD motif, and POLR1B/RPA2 participating in the coordination of a second Mg(2+) ion and providing lysine residues believed to facilitate Watson-Crick base pairing between the incoming nucleotide and the template base. Typically, Mg(2+) ions direct a 5' nucleoside triphosphate to form a phosphodiester bond with the 3' hydroxyl of the preceding nucleotide of the nascent RNA, with the elimination of pyrophosphate. Has proofreading activity: Pauses and backtracks to allow the cleavage of a missincorporated nucleotide via POLR1H/RPA12. High Pol I processivity is associated with decreased transcription fidelity. The sequence is that of DNA-directed RNA polymerase I subunit RPA1 from Rattus norvegicus (Rat).